We begin with the raw amino-acid sequence, 334 residues long: Methionine adenosyltransferase 2 subunit beta (334 aa).

Residues 37-40 (TGLL), 60-62 (FRR), 71-72 (NL), cysteine 93, arginine 97, tyrosine 159, and leucine 185 contribute to the NADP(+) site. A Phosphothreonine modification is found at threonine 309. The tract at residues 319–334 (LWPFLIDKRWRQTVFH) is required for interaction with MAT2A.

This sequence belongs to the dTDP-4-dehydrorhamnose reductase family. MAT2B subfamily. As to quaternary structure, heterotrimer; composed of a catalytic MAT2A homodimer that binds one regulatory MAT2B chain. Heterohexamer; composed of a central, catalytic MAT2A homotetramer flanked on either side by a regulatory MAT2B chain. NADP binding increases the affinity for MAT2A.

The protein operates within amino-acid biosynthesis; S-adenosyl-L-methionine biosynthesis; S-adenosyl-L-methionine from L-methionine: step 1/1. Regulatory subunit of S-adenosylmethionine synthetase 2, an enzyme that catalyzes the formation of S-adenosylmethionine from methionine and ATP. Regulates MAT2A catalytic activity by changing its kinetic properties, increasing its affinity for L-methionine. Can bind NADP (in vitro). In Mus musculus (Mouse), this protein is Methionine adenosyltransferase 2 subunit beta (Mat2b).